A 506-amino-acid chain; its full sequence is Cobyric acid synthase (506 aa).

One can recognise a GATase cobBQ-type domain in the interval 251–448 (DITIAIVQLP…LHGLFDSDAF (198 aa)). Cys-332 acts as the Nucleophile in catalysis. His-440 is an active-site residue.

Belongs to the CobB/CobQ family. CobQ subfamily.

It participates in cofactor biosynthesis; adenosylcobalamin biosynthesis. In terms of biological role, catalyzes amidations at positions B, D, E, and G on adenosylcobyrinic A,C-diamide. NH(2) groups are provided by glutamine, and one molecule of ATP is hydrogenolyzed for each amidation. The sequence is that of Cobyric acid synthase from Salmonella dublin (strain CT_02021853).